We begin with the raw amino-acid sequence, 83 residues long: NAD(P)H-quinone oxidoreductase subunit L (83 aa).

2 helical membrane-spanning segments follow: residues 18 to 38 (ILAY…ALFF) and 53 to 73 (LLVY…APFL).

This sequence belongs to the complex I NdhL subunit family. NDH-1 can be composed of about 15 different subunits; different subcomplexes with different compositions have been identified which probably have different functions.

It localises to the cellular thylakoid membrane. The catalysed reaction is a plastoquinone + NADH + (n+1) H(+)(in) = a plastoquinol + NAD(+) + n H(+)(out). It carries out the reaction a plastoquinone + NADPH + (n+1) H(+)(in) = a plastoquinol + NADP(+) + n H(+)(out). In terms of biological role, NDH-1 shuttles electrons from an unknown electron donor, via FMN and iron-sulfur (Fe-S) centers, to quinones in the respiratory and/or the photosynthetic chain. The immediate electron acceptor for the enzyme in this species is believed to be plastoquinone. Couples the redox reaction to proton translocation, and thus conserves the redox energy in a proton gradient. Cyanobacterial NDH-1 also plays a role in inorganic carbon-concentration. This chain is NAD(P)H-quinone oxidoreductase subunit L, found in Parasynechococcus marenigrum (strain WH8102).